The following is a 425-amino-acid chain: Adenylosuccinate synthetase (425 aa).

GTP is bound by residues 12 to 18 (GDEGKGK) and 40 to 42 (GHT). The active-site Proton acceptor is the Asp13. Mg(2+) contacts are provided by Asp13 and Gly40. Residues 13–16 (DEGK), 38–41 (NAGH), Thr130, Arg144, Gln224, Thr239, and Arg301 contribute to the IMP site. The Proton donor role is filled by His41. Residue 297-303 (TVSNRRR) participates in substrate binding. GTP is bound by residues Arg303, 329-331 (KLD), and 411-413 (STS).

This sequence belongs to the adenylosuccinate synthetase family. In terms of assembly, homodimer. Requires Mg(2+) as cofactor.

It is found in the cytoplasm. It catalyses the reaction IMP + L-aspartate + GTP = N(6)-(1,2-dicarboxyethyl)-AMP + GDP + phosphate + 2 H(+). Its pathway is purine metabolism; AMP biosynthesis via de novo pathway; AMP from IMP: step 1/2. In terms of biological role, plays an important role in the de novo pathway of purine nucleotide biosynthesis. Catalyzes the first committed step in the biosynthesis of AMP from IMP. This chain is Adenylosuccinate synthetase, found in Wolbachia pipientis wMel.